A 635-amino-acid polypeptide reads, in one-letter code: Threonine--tRNA ligase (635 aa).

In terms of domain architecture, TGS spans 1 to 61; it reads MIKITLKDGK…HKDSSLEILT (61 aa). The catalytic stretch occupies residues 242 to 532; that stretch reads DHRKLGKELD…LIEQYAGAFP (291 aa). Residues Cys333, His384, and His509 each coordinate Zn(2+).

It belongs to the class-II aminoacyl-tRNA synthetase family. In terms of assembly, homodimer. The cofactor is Zn(2+).

The protein resides in the cytoplasm. It catalyses the reaction tRNA(Thr) + L-threonine + ATP = L-threonyl-tRNA(Thr) + AMP + diphosphate + H(+). Functionally, catalyzes the attachment of threonine to tRNA(Thr) in a two-step reaction: L-threonine is first activated by ATP to form Thr-AMP and then transferred to the acceptor end of tRNA(Thr). Also edits incorrectly charged L-seryl-tRNA(Thr). This chain is Threonine--tRNA ligase, found in Clostridium botulinum (strain Kyoto / Type A2).